Consider the following 52-residue polypeptide: uncharacterized protein (52 aa).

This is an uncharacterized protein from Rickettsia conorii (strain ATCC VR-613 / Malish 7).